A 143-amino-acid chain; its full sequence is Cofilin (143 aa).

The ADF-H domain occupies 5–137 (GVAVSDEALK…AYESVLEKIS (133 aa)).

This sequence belongs to the actin-binding proteins ADF family.

It localises to the cytoplasm. The protein resides in the cytoskeleton. Its subcellular location is the nucleus matrix. Functionally, controls reversibly actin polymerization and depolymerization in a pH-sensitive manner. It has the ability to bind G- and F-actin in a 1:1 ratio of cofilin to actin. Binding to F-actin is regulated by tropomyosin. It is the major component of intranuclear and cytoplasmic actin rods. Required for accumulation of actin at the cell division site via depolymerizing actin at the cell ends. In association with myosin II has a role in the assembly of the contractile ring via severing actin filaments. Involved in the maintenance of the contractile ring once formed. In association with profilin and capping protein, has a role in the mitotic reorganization of the actin cytoskeleton. The polypeptide is Cofilin (COF1) (Ogataea parapolymorpha (strain ATCC 26012 / BCRC 20466 / JCM 22074 / NRRL Y-7560 / DL-1) (Yeast)).